Here is a 1036-residue protein sequence, read N- to C-terminus: MAPRLQLEKAAWRWAETVRPEEVSQEHIETAYRIWLEPCIRGVCRRNCRGNPNCLVGIGEHIWLGEIDENSFHNIDDPNCERRKKNSFVGLTNLGASCYVNTFLQVWFLNLELRQALYLCPSTCSDYTKGDGIRGGKDYEPQTICEHLQYLFALLQNSNRRYIDPSGFVKALGLDTGQQQDAQESSKLFMSLLEDTLSKQKNPDVRNVVQQQFCGEYAYVTVCSQCGRESKLVSKFYELELNIQGHKQLTDCISEFLKEERLEGDNRYFCENCQSKQNATRKIRLLSLPCTLNLQLMRFVFDRQTGHKKKLNAYIGFSESLDMEPYVEHKGGSFVYELSAVLIHRGVSAYSGHYIAHVKDPQSGDWYKFNDEDIEKMEGKKLQLGIEEDLTEPSKSQTRKPKCGKGTHCSRNAYMLVYRLQTQEKNHTMVQVPAFLQELVDRDNSKFEEWCVEMAEMRRQSVDKGRAKHEEVKELYQRLPAGAEPYEFVSLEWLQKWLDESTPTKPIDNNACLCSHDKLHPDKISIMKRISEYAADIFYSRYGGGPRLTVKALCKDCVVERCRILRLKNQLNEDYKTVNNLLKATMKGSDGFWVGKSSLRSWRQLALEQLDEQDGEAEQSNGKINGSPFSKDESKEEKKEEEEELNFNEDILCPHGELSISENERRLVSQEAWSKLQQYFPKAPEFPSYKECCSQCKILEREGEENEALHKMIAKEQKTSLPNLFQDKNRPCLSNWPEDTDALYIVSHFFLDEWRKFVRKPARSTPVSSVGNAALLCPHGGLMFTFPSLTKEDSKLIALIWPSEWQMIQKLFVVDKVIKITRIEVGDVNPSQTQYISEPNLCPDCREGLLCQQQKDLREYTQATIYVHKVVDNKKVMKDSAPELNVSSSETEEDKEEAKPDGEKDPDFNQSNGGTKRQKTSQQGYVAYQKQVIRRSTRHRKVRGEKALLVSANQTLKELKIQIMHAFSVAPFDQNLSIDGKILNDDCATLGTLGVIPESVILLKADEPIADYAAMDDVMQVCMPEEGFKGTGLLGH.

Residues 89–421 (VGLTNLGASC…NAYMLVYRLQ (333 aa)) form the USP domain. The active-site Nucleophile is the Cys98. His353 (proton acceptor) is an active-site residue. 3 DUSP domains span residues 460-554 (QSVD…KALC), 569-692 (NQLN…YKEC), and 712-825 (MIAK…RIEV). Residues 611–644 (DEQDGEAEQSNGKINGSPFSKDESKEEKKEEEEE) form a disordered region. Residues 618 to 628 (EQSNGKINGSP) show a composition bias toward polar residues. Residues 881 to 924 (APELNVSSSETEEDKEEAKPDGEKDPDFNQSNGGTKRQKTSQQG) are disordered. Residues Ser887, Ser888, and Ser889 each carry the phosphoserine modification. A compositionally biased stretch (basic and acidic residues) spans 896 to 907 (EEAKPDGEKDPD). Polar residues predominate over residues 908-924 (FNQSNGGTKRQKTSQQG). A Ubiquitin-like domain is found at 930–1010 (KQVIRRSTRH…ILLKADEPIA (81 aa)). Position 957 is an N6-acetyllysine (Lys957).

Belongs to the peptidase C19 family. As to quaternary structure, interacts with TRAF2 and RELA. Interacts with GPS1. Present in the brain, in particular in the postsynaptic density and the dendritic lipid raft fractions (at protein level).

Its subcellular location is the cytoplasm. The protein resides in the nucleus. It localises to the cell projection. It is found in the cilium. It catalyses the reaction Thiol-dependent hydrolysis of ester, thioester, amide, peptide and isopeptide bonds formed by the C-terminal Gly of ubiquitin (a 76-residue protein attached to proteins as an intracellular targeting signal).. In terms of biological role, deubiquitinase that recognizes and hydrolyzes the peptide bond at the C-terminal Gly of ubiquitin. Involved in the processing of polyubiquitin precursors as well as that of ubiquitinated proteins. Plays a role in the regulation of NF-kappa-B activation by TNF receptor superfamily via its interactions with RELA and TRAF2. May also play a regulatory role at postsynaptic sites. Plays an important role in cell cycle progression by deubiquitinating Aurora B/AURKB and thereby extending its stability. In the context of H. pylori infection, stabilizes nuclear RELA through deubiquitination, thereby promoting the transcriptional activity of RELA to prolong TNFAIP3 de novo synthesis. Consequently, TNFAIP3 suppresses caspase activity and apoptotic cell death. Also functions in the modulation of the ciliary and synaptic transport as well as cytoskeleton organization, which are key for photoreceptor function and homeostasis. To achieve this, stabilizes the levels of the retinal degeneration-associated proteins ARL3 and UNC119 using distinct mechanisms. Plays a positive role in pyroptosis by stabilizing gasdermin E/GSDME through removal of its 'Lys-48'-linked ubiquitination. This Rattus norvegicus (Rat) protein is Ubiquitin carboxyl-terminal hydrolase 48 (Usp48).